A 95-amino-acid polypeptide reads, in one-letter code: FXYD domain-containing ion transport regulator 6 (95 aa).

Positions 1–18 (MELVLVFLCSLLAPMVLA) are cleaved as a signal peptide. Residues 19–35 (SAAEKEKEMDPFHYDYQ) lie on the Extracellular side of the membrane. Residues 36-57 (TLRIGGLVFAVVLFSVGILLIL) traverse the membrane as a helical segment. Over 58–95 (SRRCKCSFNQKPRAPGDEEAQVENLITANATEPQKAEN) the chain is Cytoplasmic. Residues 69–95 (PRAPGDEEAQVENLITANATEPQKAEN) are disordered.

Belongs to the FXYD family. In terms of assembly, regulatory subunit of the sodium/potassium-transporting ATPase which is composed of a catalytic alpha subunit, a non-catalytic beta subunit and an additional regulatory subunit. The regulatory subunit, a member of the FXYD protein family, modulates the enzymatic activity in a tissue- and isoform-specific way by changing affinities of the Na+/K+-ATPase toward Na(+), K(+) or ATP.

Its subcellular location is the cell membrane. Its function is as follows. Associates with and regulates the activity of the sodium/potassium-transporting ATPase (NKA) which catalyzes the hydrolysis of ATP coupled with the exchange of Na(+) and K(+) ions across the plasma membrane. Reduces the apparent affinity for intracellular Na(+) with no change in the apparent affinity for extracellular K(+). In addition to modulating NKA kinetics, may also function as a regulator of NKA localization to the plasma membrane. In Homo sapiens (Human), this protein is FXYD domain-containing ion transport regulator 6.